Consider the following 66-residue polypeptide: MFKEYKIYKFFEQVKQETYKVVWPTRKELVASTLVVVVAVFIFSPICLVLDYSIHNIMQLLLNIGK.

A helical transmembrane segment spans residues 29–49 (LVASTLVVVVAVFIFSPICLV).

This sequence belongs to the SecE/SEC61-gamma family. As to quaternary structure, component of the Sec protein translocase complex. Heterotrimer consisting of SecY, SecE and SecG subunits. The heterotrimers can form oligomers, although 1 heterotrimer is thought to be able to translocate proteins. Interacts with the ribosome. Interacts with SecDF, and other proteins may be involved. Interacts with SecA.

Its subcellular location is the cell inner membrane. Essential subunit of the Sec protein translocation channel SecYEG. Clamps together the 2 halves of SecY. May contact the channel plug during translocation. This chain is Protein translocase subunit SecE, found in Rickettsia montanensis.